The chain runs to 196 residues: Corrinoid adenosyltransferase (196 aa).

36–42 (GNGKGKT) is an ATP binding site.

Belongs to the Cob(I)alamin adenosyltransferase family.

It is found in the cytoplasm. The catalysed reaction is 2 cob(II)yrinate a,c diamide + reduced [electron-transfer flavoprotein] + 2 ATP = 2 adenosylcob(III)yrinate a,c-diamide + 2 triphosphate + oxidized [electron-transfer flavoprotein] + 3 H(+). It catalyses the reaction 2 cob(II)alamin + reduced [electron-transfer flavoprotein] + 2 ATP = 2 adenosylcob(III)alamin + 2 triphosphate + oxidized [electron-transfer flavoprotein] + 3 H(+). It functions in the pathway cofactor biosynthesis; adenosylcobalamin biosynthesis; adenosylcobalamin from cob(II)yrinate a,c-diamide: step 2/7. Required for both de novo synthesis of the corrin ring for the assimilation of exogenous corrinoids. Participates in the adenosylation of a variety of incomplete and complete corrinoids. The sequence is that of Corrinoid adenosyltransferase (btuR) from Escherichia coli O6:H1 (strain CFT073 / ATCC 700928 / UPEC).